We begin with the raw amino-acid sequence, 448 residues long: MSTFRQEDVEDHYEMGEELGSGQFAIVRKCQQKGTGMEYAAKFIKKRRLPSSRRGVSREEIEREVSILREIRHPNIITLHDVFENKTDVVLILELVSGGELFDFLAEKESLTEDEATQFLKQILDGVHYLHSKRIAHFDLKPENIMLLDKHAASPRIKLIDFGIAHRIEAGSEFKNIFGTPEFVAPEIVNYEPLGLEADMWSIGVITYILLSGASPFLGETKQETLTNISAVNYDFDEEYFSSTSELAKDFIRRLLVKDPKRRMTIAQSLEHSWIKVRRREDGARKPERRRLRAARLREYSLKSHSSMPRNTSYASFERFSRVLEDVAAAEQGLRELQRGRRQCRERVCALRVAAEQREARCRDGSAGLGRDLRRLRTELGRTEALRTRAQEEARAALLGAGGLKRRLCRLENRYDALAAQVAAEVQFVRDLVRALEQERLQAECGVR.

Positions 13–275 (YEMGEELGSG…IAQSLEHSWI (263 aa)) constitute a Protein kinase domain. ATP is bound by residues 19-27 (LGSGQFAIV) and lysine 42. Catalysis depends on aspartate 139, which acts as the Proton acceptor. Positions 161-204 (DFGIAHRIEAGSEFKNIFGTPEFVAPEIVNYEPLGLEADMWSIG) are activation segment. Threonine 180 and threonine 225 each carry phosphothreonine. Phosphothreonine; by autocatalysis is present on threonine 265. Threonine 265 bears the Phosphothreonine; by ROCK1 mark. The residue at position 304 (serine 304) is a Phosphoserine; by DAPK1. At serine 306 the chain carries Phosphoserine; by autocatalysis and DAPK1. A phosphoserine; by DAPK1 mark is found at serine 307, serine 313, and serine 321. The interval 390–448 (AQEEARAALLGAGGLKRRLCRLENRYDALAAQVAAEVQFVRDLVRALEQERLQAECGVR) is interaction with CDC5L. A required for interaction with ATF4 but not with PAWR region spans residues 418-448 (LAAQVAAEVQFVRDLVRALEQERLQAECGVR). The segment at 422–436 (VAAEVQFVRDLVRAL) is leucine-zipper.

Belongs to the protein kinase superfamily. CAMK Ser/Thr protein kinase family. DAP kinase subfamily. As to quaternary structure, homooligomer in its kinase-active form (homotrimers and homodimers are reported); monomeric in its kinase-inactive form. Homodimerization is required for activation segment autophosphorylation. Interacts with DAXX, ATF4, NLK, TCF7L2, UBE2D1, UBE2D2, UBE2D3 and CDC5L. Interacts with PAWR; also demonstrated in aorta smooth muscle cells indicative for the cytoskeletal targeting function of PAWR. Interacts with AR; enhanced by AATF. Interacts with LUZP1; the interaction is likely to occur throughout the cell cycle and reduces the LUZP1-mediated suppression of MYL9 phosphorylation. It depends on Mg(2+) as a cofactor. Post-translationally, ubiquitinated. Ubiquitination mediated by the UBE2D3 E3 ligase does not lead to proteasomal degradation, but influences promyelocytic leukemia protein nuclear bodies (PML-NBs) formation in the nucleus. The phosphorylation status is critical for kinase activity, oligomerization and intracellular localization. Phosphorylation at Thr-180, Thr-225 and Thr-265 is essential for activity. The phosphorylated form is localized in the cytoplasm and nuclear translocation or retention is maximal when it is not phosphorylated. Phosphorylation increases the trimeric form, and its dephosphorylation favors a kinase-inactive monomeric form. As to expression, ubiquitously expressed in all tissue types examined. High levels in brain, heart, lung and spleen, lower expression in kidney, liver, skeletal muscle and testis. Isoform 2 is expressed in the smooth muscle.

It is found in the nucleus. Its subcellular location is the PML body. The protein resides in the cytoplasm. The protein localises to the cytoskeleton. It localises to the microtubule organizing center. It is found in the chromosome. Its subcellular location is the centromere. The protein resides in the spindle. The protein localises to the midbody. The enzyme catalyses L-seryl-[protein] + ATP = O-phospho-L-seryl-[protein] + ADP + H(+). It carries out the reaction L-threonyl-[protein] + ATP = O-phospho-L-threonyl-[protein] + ADP + H(+). With respect to regulation, a sequential activation is proposed: autophosphorylation at consensus sites is leading to dimerization of the catalytic domain and activation segment exchange (producing an active confirmation of both kinase modules in trans) followed by phosphorylation at Thr-180 in the activation segment and at other regulatory sites. Phosphorylation at Thr-180, Thr-225 and Thr-265 is essential for activity. Inhibited by pyridone 6 (K00225), a potent, ATP-competitive inhibitor. Phosphorylation at Thr-180, Thr-225 and Thr-265 is essential for activity. Its function is as follows. Serine/threonine kinase which is involved in the regulation of apoptosis, autophagy, transcription, translation and actin cytoskeleton reorganization. Regulates both type I (caspase-dependent) apoptotic and type II (caspase-independent) autophagic cell deaths signal, depending on the cellular setting. Involved in formation of promyelocytic leukemia protein nuclear body (PML-NB). Involved in apoptosis involving PAWR which mediates cytoplasmic relocation; in vitro phosphorylates PAWR. Regulates myosin phosphorylation in both smooth muscle and non-muscle cells. In smooth muscle, regulates myosin either directly by phosphorylating MYL12B and MYL9 or through inhibition of smooth muscle myosin phosphatase (SMPP1M) via phosphorylation of PPP1R12A; the inhibition of SMPP1M functions to enhance muscle responsiveness to Ca(2+) and promote a contractile state. Phosphorylates MYL12B in non-muscle cells leading to reorganization of actin cytoskeleton such as in regulation of cell polarity and cell migration. Positively regulates canonical Wnt/beta-catenin signaling through interaction with NLK and TCF7L2; disrupts the NLK-TCF7L2 complex thereby influencing the phosphorylation of TCF7L2 by NLK. Phosphorylates RPL13A on 'Ser-77' upon interferon-gamma activation which is causing RPL13A release from the ribosome, RPL13A association with the GAIT complex and its subsequent involvement in transcript-selective translation inhibition. Phosphorylates STAT3 and enhances its transcriptional activity. Enhances transcription from AR-responsive promoters in a hormone- and kinase-dependent manner. Phosphorylates histone H3 on 'Thr-11' at centromeres during mitosis. The protein is Death-associated protein kinase 3 (Dapk3) of Rattus norvegicus (Rat).